Reading from the N-terminus, the 478-residue chain is uncharacterized protein (478 aa).

In terms of domain architecture, ATP-grasp spans 174-366 (RQVLAAAGVP…LIGEHIKLAI (193 aa)). 214 to 219 (GSGSRG) serves as a coordination point for ATP. The active site involves Arg-339.

This is an uncharacterized protein from Sinorhizobium fredii (strain NBRC 101917 / NGR234).